Consider the following 317-residue polypeptide: Acetyl-coenzyme A carboxylase carboxyl transferase subunit alpha (317 aa).

The 255-residue stretch at 40 to 294 folds into the CoA carboxyltransferase C-terminal domain; it reads RLQKKSEELT…KQQILADLQD (255 aa).

This sequence belongs to the AccA family. Acetyl-CoA carboxylase is a heterohexamer composed of biotin carboxyl carrier protein (AccB), biotin carboxylase (AccC) and two subunits each of ACCase subunit alpha (AccA) and ACCase subunit beta (AccD).

The protein localises to the cytoplasm. It catalyses the reaction N(6)-carboxybiotinyl-L-lysyl-[protein] + acetyl-CoA = N(6)-biotinyl-L-lysyl-[protein] + malonyl-CoA. Its pathway is lipid metabolism; malonyl-CoA biosynthesis; malonyl-CoA from acetyl-CoA: step 1/1. Functionally, component of the acetyl coenzyme A carboxylase (ACC) complex. First, biotin carboxylase catalyzes the carboxylation of biotin on its carrier protein (BCCP) and then the CO(2) group is transferred by the carboxyltransferase to acetyl-CoA to form malonyl-CoA. This Actinobacillus pleuropneumoniae serotype 5b (strain L20) protein is Acetyl-coenzyme A carboxylase carboxyl transferase subunit alpha.